Here is a 294-residue protein sequence, read N- to C-terminus: Major pollen allergen Pha a 5.3 (294 aa).

The N-terminal stretch at 1-25 (MAVQKYTVALFLAMALVAGPAASYA) is a signal peptide.

This sequence belongs to the Poa p IX/Phl p VI allergen family.

This is Major pollen allergen Pha a 5.3 from Phalaris aquatica (Canary grass).